The chain runs to 211 residues: Recombination protein RecR (211 aa).

The C4-type zinc-finger motif lies at 70-85 (CRECFLITDREVCPIC). Positions 93 to 190 (KFICVVEESQ…KITRTAYGFQ (98 aa)) constitute a Toprim domain.

Belongs to the RecR family.

May play a role in DNA repair. It seems to be involved in an RecBC-independent recombinational process of DNA repair. It may act with RecF and RecO. The sequence is that of Recombination protein RecR from Aquifex aeolicus (strain VF5).